Here is a 229-residue protein sequence, read N- to C-terminus: Protein 33K (229 aa).

The tract at residues 1–157 is disordered; sequence MAPKKKLQLP…GALRLAPNEP (157 aa). A compositionally biased stretch (acidic residues) spans 14 to 54; that stretch reads TDEEEYWDSQAEEVLDEEEEDMMEDWESLDEEASEVEEVSD. Low complexity-rich tracts occupy residues 55-64, 71-82, and 100-122; these read ETPSPSVAFP, SATGSSMATTSA, and TTGTRAAHTAPAAAAAAATAAAT. A necessary for nuclear subcellular location region spans residues 172–199; the sequence is YAIFQQSRGQEQELKIKNRSLRSLTRSC. Residues 178 to 198 form an RS-repeat; required for splicing enhancer activity region; the sequence is SRGQEQELKIKNRSLRSLTRS.

This sequence belongs to the adenoviridae splicing factor family. In terms of assembly, homooligomer. Interacts with DBP; this interaction occurs at a unique vertex during genome packaging. Interacts with IVa2; this interaction occurs at a unique vertex during genome packaging and seems to potentiate IVa2 and 33K oligomerization. Phosphorylated in vitro by human PKA and PRKDC. PRKDC inhibits, whereas PKA activates the splicing factor.

It is found in the host nucleus. In terms of biological role, promotes alternative splicing of late transcripts by promoting splicing at weak 3' splice sites. Required for the temporal activation of major late pre-mRNA splicing at late times of infection. Induces the splicing and expression of the late capsid vertex protein. Its function is as follows. Probably functions as the small terminase that is part of the molecular motor that translocates genomic DNA in empty capsid during DNA packaging. This motor is located at a unique vertex and comprises at least the IVa2 ATPase, the small terminase 33K and probably a portal. Forms a ring-like structure of about 17 nm in which genomic DNA is translocated into the capsid. Stimulates IVa2 ATPase activity in the presence of the viral genome. Once the DNA is packaged, the terminase detaches: the 33K protein is present in the empty particles, but not in the mature virions. Also involved in virion assembly. In Homo sapiens (Human), this protein is Protein 33K.